The following is a 163-amino-acid chain: SsrA-binding protein (163 aa).

Basic and acidic residues predominate over residues 135–156; the sequence is GKKEHDKRDDTKEREWKIEKSR. The segment at 135–163 is disordered; it reads GKKEHDKRDDTKEREWKIEKSRTMKHAAR.

It belongs to the SmpB family.

It is found in the cytoplasm. Its function is as follows. Required for rescue of stalled ribosomes mediated by trans-translation. Binds to transfer-messenger RNA (tmRNA), required for stable association of tmRNA with ribosomes. tmRNA and SmpB together mimic tRNA shape, replacing the anticodon stem-loop with SmpB. tmRNA is encoded by the ssrA gene; the 2 termini fold to resemble tRNA(Ala) and it encodes a 'tag peptide', a short internal open reading frame. During trans-translation Ala-aminoacylated tmRNA acts like a tRNA, entering the A-site of stalled ribosomes, displacing the stalled mRNA. The ribosome then switches to translate the ORF on the tmRNA; the nascent peptide is terminated with the 'tag peptide' encoded by the tmRNA and targeted for degradation. The ribosome is freed to recommence translation, which seems to be the essential function of trans-translation. The protein is SsrA-binding protein of Shewanella loihica (strain ATCC BAA-1088 / PV-4).